A 365-amino-acid polypeptide reads, in one-letter code: H-2 class I histocompatibility antigen, D-D alpha chain (365 aa).

An N-terminal signal peptide occupies residues 1-24; that stretch reads MGAMAPRTLLLLLAAALGPTQTRA. Residues 25-114 form an alpha-1 region; sequence GSHSLRYFVT…ALRYYNQSAG (90 aa). Residues 25–311 are Extracellular-facing; that stretch reads GSHSLRYFVT…EPPSSTKTNT (287 aa). N-linked (GlcNAc...) asparagine glycosylation occurs at N110. The alpha-2 stretch occupies residues 115-206; that stretch reads GSHTLQWMAG…KNGNATLLRT (92 aa). C125 and C188 are oxidised to a cystine. An N-linked (GlcNAc...) asparagine glycan is attached at N200. The segment at 207–298 is alpha-3; sequence DPPKAHVTHH…GLPEPLTLRW (92 aa). An Ig-like C1-type domain is found at 209-297; it reads PKAHVTHHRR…EGLPEPLTLR (89 aa). A disulfide bridge links C227 with C283. Residues 299–311 are connecting peptide; sequence GKEEPPSSTKTNT. Residues 312–334 form a helical membrane-spanning segment; it reads VIIAVPVVLGAVVILGAVMAFVM. Residues 335–365 lie on the Cytoplasmic side of the membrane; the sequence is KRRRNTGGKGGDYALAPGSQSSDMSLPDCKV. A disordered region spans residues 343-365; that stretch reads KGGDYALAPGSQSSDMSLPDCKV. A phosphoserine mark is found at S356 and S359.

It belongs to the MHC class I family. As to quaternary structure, heterodimer of an alpha chain and a beta chain (beta-2-microglobulin).

The protein localises to the membrane. Functionally, involved in the presentation of foreign antigens to the immune system. This Mus musculus (Mouse) protein is H-2 class I histocompatibility antigen, D-D alpha chain (H2-D1).